The primary structure comprises 621 residues: Bifunctional 3'-phosphoadenosine 5'-phosphosulfate synthase 2 (621 aa).

The adenylyl-sulfate kinase stretch occupies residues 1 to 216 (MSANFKMNHK…VVELLQEQNI (216 aa)). Position 53-58 (53-58 (GAGKTT)) interacts with ATP. Residues 80-83 (DNVR), Phe-92, 97-100 (REEN), 123-124 (IS), Lys-162, and 175-176 (GF) contribute to the adenosine 5'-phosphosulfate site. ATP-binding positions include Ser-198, 415-418 (QLRN), 517-521 (GRDPA), and Ala-559. Residues 225 to 621 (IHELFVPENK…DYYRSLEKTN (397 aa)) are sulfate adenylyltransferase.

It in the N-terminal section; belongs to the APS kinase family. The protein in the C-terminal section; belongs to the sulfate adenylyltransferase family. As to expression, expressed in liver, cartilage, skin and brain.

The enzyme catalyses sulfate + ATP + H(+) = adenosine 5'-phosphosulfate + diphosphate. It carries out the reaction adenosine 5'-phosphosulfate + ATP = 3'-phosphoadenylyl sulfate + ADP + H(+). It functions in the pathway sulfur metabolism; sulfate assimilation. Bifunctional enzyme with both ATP sulfurylase and APS kinase activity, which mediates two steps in the sulfate activation pathway. The first step is the transfer of a sulfate group to ATP to yield adenosine 5'-phosphosulfate (APS), and the second step is the transfer of a phosphate group from ATP to APS yielding 3'-phosphoadenylylsulfate/PAPS, the activated sulfate donor used by sulfotransferases. In mammals, PAPS is the sole source of sulfate while APS appears to only be an intermediate in the sulfate-activation pathway. May have an important role in skeletogenesis during postnatal growth. The chain is Bifunctional 3'-phosphoadenosine 5'-phosphosulfate synthase 2 (Papss2) from Mus musculus (Mouse).